Here is a 159-residue protein sequence, read N- to C-terminus: Heat shock protein beta-9 (159 aa).

Positions 36–147 (LLRDSPAAQE…EAQTGPSPRL (112 aa)) constitute a sHSP domain.

The protein belongs to the small heat shock protein (HSP20) family. Testis specific.

It is found in the cytoplasm. It localises to the nucleus. The polypeptide is Heat shock protein beta-9 (HSPB9) (Homo sapiens (Human)).